The chain runs to 253 residues: 5'-nucleotidase SurE (253 aa).

Residues aspartate 8, aspartate 9, serine 39, and asparagine 91 each coordinate a divalent metal cation.

This sequence belongs to the SurE nucleotidase family. It depends on a divalent metal cation as a cofactor.

The protein resides in the cytoplasm. The catalysed reaction is a ribonucleoside 5'-phosphate + H2O = a ribonucleoside + phosphate. Functionally, nucleotidase that shows phosphatase activity on nucleoside 5'-monophosphates. This is 5'-nucleotidase SurE from Leptothrix cholodnii (strain ATCC 51168 / LMG 8142 / SP-6) (Leptothrix discophora (strain SP-6)).